Reading from the N-terminus, the 110-residue chain is Large ribosomal subunit protein uL22 (110 aa).

Belongs to the universal ribosomal protein uL22 family. Part of the 50S ribosomal subunit.

Its function is as follows. This protein binds specifically to 23S rRNA; its binding is stimulated by other ribosomal proteins, e.g. L4, L17, and L20. It is important during the early stages of 50S assembly. It makes multiple contacts with different domains of the 23S rRNA in the assembled 50S subunit and ribosome. The globular domain of the protein is located near the polypeptide exit tunnel on the outside of the subunit, while an extended beta-hairpin is found that lines the wall of the exit tunnel in the center of the 70S ribosome. The protein is Large ribosomal subunit protein uL22 of Mycoplasmopsis pulmonis (strain UAB CTIP) (Mycoplasma pulmonis).